We begin with the raw amino-acid sequence, 125 residues long: Fumarate reductase subunit D (125 aa).

3 helical membrane-spanning segments follow: residues 30–50 (FAMLTPITVLVLGILVPLGVI), 62–82 (AFATSIIGALFIIGTLALPMW), and 105–125 (VACYAFAGLITALAVIFIFMI).

It belongs to the FrdD family. Part of an enzyme complex containing four subunits: a flavoprotein (FrdA), an iron-sulfur protein (FrdB), and two hydrophobic anchor proteins (FrdC and FrdD).

The protein resides in the cell inner membrane. Functionally, anchors the catalytic components of the fumarate reductase complex to the cell membrane, binds quinones. This is Fumarate reductase subunit D from Vibrio parahaemolyticus serotype O3:K6 (strain RIMD 2210633).